Consider the following 337-residue polypeptide: Fructose-1,6-bisphosphatase class 1 (337 aa).

Residues glutamate 94, aspartate 116, leucine 118, and aspartate 119 each coordinate Mg(2+). Substrate contacts are provided by residues 119-122 (DGSS), asparagine 210, and lysine 276. Mg(2+) is bound at residue glutamate 282.

The protein belongs to the FBPase class 1 family. Homotetramer. Mg(2+) is required as a cofactor.

The protein localises to the cytoplasm. It catalyses the reaction beta-D-fructose 1,6-bisphosphate + H2O = beta-D-fructose 6-phosphate + phosphate. The protein operates within carbohydrate biosynthesis; gluconeogenesis. The polypeptide is Fructose-1,6-bisphosphatase class 1 (Burkholderia orbicola (strain MC0-3)).